The following is a 775-amino-acid chain: Semaphorin-3E (775 aa).

A signal peptide spans 1 to 25 (MAPAGHILTLLLWGHLLELWTPGHS). Positions 32-516 (RLRLSHKELL…SASAVAQVRF (485 aa)) constitute a Sema domain. N-linked (GlcNAc...) asparagine glycosylation occurs at asparagine 44. An intrachain disulfide couples cysteine 105 to cysteine 115. N-linked (GlcNAc...) asparagine glycosylation is present at asparagine 126. Cysteine 133 and cysteine 142 are oxidised to a cystine. Residues asparagine 175 and asparagine 330 are each glycosylated (N-linked (GlcNAc...) asparagine). Intrachain disulfides connect cysteine 270–cysteine 382, cysteine 294–cysteine 342, and cysteine 519–cysteine 537. The Ig-like C2-type domain occupies 581-669 (ALDRTEERLA…NFVHTVRKIT (89 aa)). Asparagine 596 carries an N-linked (GlcNAc...) asparagine glycan. A disulfide bridge connects residues cysteine 654 and cysteine 729.

This sequence belongs to the semaphorin family. As to quaternary structure, interacts with PLXND1. Detected in neurons in the thalamus. Detected in embryonic vasculature. Developing lungs, developing skeletal elements and ventral horns of the developing neural tube. Correlates positively with tumor progression.

It is found in the secreted. Functionally, plays an important role in signaling via the cell surface receptor PLXND1. Mediates reorganization of the actin cytoskeleton, leading to the retraction of cell projections. Promotes focal adhesion disassembly and inhibits adhesion of endothelial cells to the extracellular matrix. Regulates angiogenesis, both during embryogenesis and after birth. Can down-regulate sprouting angiogenesis. Required for normal vascular patterning during embryogenesis. Plays an important role in ensuring the specificity of synapse formation. This is Semaphorin-3E (Sema3e) from Mus musculus (Mouse).